A 331-amino-acid polypeptide reads, in one-letter code: Ketol-acid reductoisomerase (NADP(+)) (331 aa).

The 182-residue stretch at 1–182 (MATLYYDTDA…GGTRAGILET (182 aa)) folds into the KARI N-terminal Rossmann domain. NADP(+)-binding positions include 25–28 (YGSQ), serine 51, serine 53, and 83–86 (DEFQ). Residue histidine 108 is part of the active site. Glycine 134 contacts NADP(+). One can recognise a KARI C-terminal knotted domain in the interval 183–328 (NFKEETETDL…KGLRAMFSWL (146 aa)). 4 residues coordinate Mg(2+): aspartate 191, glutamate 195, glutamate 227, and glutamate 231. Serine 252 contacts substrate.

The protein belongs to the ketol-acid reductoisomerase family. It depends on Mg(2+) as a cofactor.

The enzyme catalyses (2R)-2,3-dihydroxy-3-methylbutanoate + NADP(+) = (2S)-2-acetolactate + NADPH + H(+). It carries out the reaction (2R,3R)-2,3-dihydroxy-3-methylpentanoate + NADP(+) = (S)-2-ethyl-2-hydroxy-3-oxobutanoate + NADPH + H(+). It participates in amino-acid biosynthesis; L-isoleucine biosynthesis; L-isoleucine from 2-oxobutanoate: step 2/4. It functions in the pathway amino-acid biosynthesis; L-valine biosynthesis; L-valine from pyruvate: step 2/4. In terms of biological role, involved in the biosynthesis of branched-chain amino acids (BCAA). Catalyzes an alkyl-migration followed by a ketol-acid reduction of (S)-2-acetolactate (S2AL) to yield (R)-2,3-dihydroxy-isovalerate. In the isomerase reaction, S2AL is rearranged via a Mg-dependent methyl migration to produce 3-hydroxy-3-methyl-2-ketobutyrate (HMKB). In the reductase reaction, this 2-ketoacid undergoes a metal-dependent reduction by NADPH to yield (R)-2,3-dihydroxy-isovalerate. The protein is Ketol-acid reductoisomerase (NADP(+)) of Synechococcus sp. (strain RCC307).